Reading from the N-terminus, the 232-residue chain is DASH complex subunit DUO1 (232 aa).

Disordered regions lie at residues 1–44 (MADE…GGMR) and 133–232 (ERRR…RGAK). A coiled-coil region spans residues 128-171 (ELEAEERRRQEEVERRAAEAERRREEARRKAEEEERRRAAAAAA). Residues 133–165 (ERRRQEEVERRAAEAERRREEARRKAEEEERRR) show a composition bias toward basic and acidic residues. Composition is skewed to low complexity over residues 167–183 (AAAAAAAAPAGRSVGRG) and 191–213 (GSGLTRGASSSASGSETTRTTSG).

It belongs to the DASH complex DUO1 family. Component of the DASH complex consisting of ASK1, DAD1, DAD2, DAD3, DAD4, DAM1, DUO1, HSK3, SPC19 and SPC34, with a stoichiometry of one copy of each subunit per complex. Multiple DASH complexes oligomerize to form a ring that encircles spindle microtubules and organizes the rod-like NDC80 complexes of the outer kinetochore. DASH complex oligomerization strengthens microtubule attachments. On cytoplasmic microtubules, DASH complexes appear to form patches instead of rings.

It localises to the nucleus. It is found in the cytoplasm. Its subcellular location is the cytoskeleton. The protein resides in the spindle pole. The protein localises to the chromosome. It localises to the centromere. It is found in the kinetochore. Component of the DASH complex that connects microtubules with kinetochores and couples microtubule depolymerisation to chromosome movement; it is involved in retrieving kinetochores to the spindle poles before their re-orientation on the spindle in early mitosis and allows microtubule depolymerization to pull chromosomes apart and resist detachment during anaphase. Kinetochores, consisting of a centromere-associated inner segment and a microtubule-contacting outer segment, play a crucial role in chromosome segregation by mediating the physical connection between centromeric DNA and microtubules. Kinetochores also serve as an input point for the spindle assembly checkpoint, which delays anaphase until all chromosomes have bioriented on the mitotic spindle. This chain is DASH complex subunit DUO1, found in Chaetomium thermophilum (strain DSM 1495 / CBS 144.50 / IMI 039719) (Thermochaetoides thermophila).